The following is a 102-amino-acid chain: Small ribosomal subunit protein uS10 (102 aa).

The protein belongs to the universal ribosomal protein uS10 family. As to quaternary structure, part of the 30S ribosomal subunit.

Its function is as follows. Involved in the binding of tRNA to the ribosomes. The protein is Small ribosomal subunit protein uS10 of Nocardioides sp. (strain ATCC BAA-499 / JS614).